Consider the following 102-residue polypeptide: Co-chaperonin GroES (102 aa).

It belongs to the GroES chaperonin family. As to quaternary structure, heptamer of 7 subunits arranged in a ring. Interacts with the chaperonin GroEL.

Its subcellular location is the cytoplasm. Together with the chaperonin GroEL, plays an essential role in assisting protein folding. The GroEL-GroES system forms a nano-cage that allows encapsulation of the non-native substrate proteins and provides a physical environment optimized to promote and accelerate protein folding. GroES binds to the apical surface of the GroEL ring, thereby capping the opening of the GroEL channel. In Vibrio harveyi (Beneckea harveyi), this protein is Co-chaperonin GroES.